Reading from the N-terminus, the 463-residue chain is Glutamate--tRNA ligase 1 (463 aa).

Positions 10–20 match the 'HIGH' region motif; it reads PSPTGYLHIGG. The short motif at 238–242 is the 'KMSKS' region element; that stretch reads KLSKR. Residue K241 participates in ATP binding.

The protein belongs to the class-I aminoacyl-tRNA synthetase family. Glutamate--tRNA ligase type 1 subfamily. Monomer.

The protein resides in the cytoplasm. It carries out the reaction tRNA(Glu) + L-glutamate + ATP = L-glutamyl-tRNA(Glu) + AMP + diphosphate. Functionally, catalyzes the attachment of glutamate to tRNA(Glu) in a two-step reaction: glutamate is first activated by ATP to form Glu-AMP and then transferred to the acceptor end of tRNA(Glu). The polypeptide is Glutamate--tRNA ligase 1 (Helicobacter pylori (strain ATCC 700392 / 26695) (Campylobacter pylori)).